The following is a 48-amino-acid chain: uncharacterized protein (48 aa).

Residues 18 to 38 (IIIKYWYIDLTITIFAFLILY) traverse the membrane as a helical segment.

It localises to the host membrane. This is an uncharacterized protein from Acidianus bottle-shaped virus (isolate Italy/Pozzuoli) (ABV).